We begin with the raw amino-acid sequence, 394 residues long: Phosphoglycerate kinase (394 aa).

Substrate-binding positions include 21–23 (DFN), arginine 36, 59–62 (HLGR), arginine 118, and arginine 151. Serine 183 is subject to Phosphoserine. 2 residues coordinate ATP: lysine 201 and glycine 292. Threonine 299 carries the post-translational modification Phosphothreonine. ATP-binding positions include glutamate 323 and 350–353 (GGDS).

The protein belongs to the phosphoglycerate kinase family. In terms of assembly, monomer.

The protein resides in the cytoplasm. It catalyses the reaction (2R)-3-phosphoglycerate + ATP = (2R)-3-phospho-glyceroyl phosphate + ADP. It participates in carbohydrate degradation; glycolysis; pyruvate from D-glyceraldehyde 3-phosphate: step 2/5. The polypeptide is Phosphoglycerate kinase (Bacillus anthracis (strain A0248)).